Here is a 318-residue protein sequence, read N- to C-terminus: Ribose-phosphate pyrophosphokinase (318 aa).

ATP-binding positions include 40-42 and 99-100; these read DGE and RQ. The Mg(2+) site is built by H134 and D173. K196 is a catalytic residue. Residues R198, D222, and 226 to 230 contribute to the D-ribose 5-phosphate site; that span reads DTAGT.

The protein belongs to the ribose-phosphate pyrophosphokinase family. Class I subfamily. As to quaternary structure, homohexamer. Requires Mg(2+) as cofactor.

The protein localises to the cytoplasm. It carries out the reaction D-ribose 5-phosphate + ATP = 5-phospho-alpha-D-ribose 1-diphosphate + AMP + H(+). It functions in the pathway metabolic intermediate biosynthesis; 5-phospho-alpha-D-ribose 1-diphosphate biosynthesis; 5-phospho-alpha-D-ribose 1-diphosphate from D-ribose 5-phosphate (route I): step 1/1. Involved in the biosynthesis of the central metabolite phospho-alpha-D-ribosyl-1-pyrophosphate (PRPP) via the transfer of pyrophosphoryl group from ATP to 1-hydroxyl of ribose-5-phosphate (Rib-5-P). In Burkholderia pseudomallei (strain K96243), this protein is Ribose-phosphate pyrophosphokinase.